The primary structure comprises 280 residues: Fructose-1,6-bisphosphatase class 1 (280 aa).

Glu-64, Asp-83, Leu-85, and Asp-86 together coordinate Mg(2+). Substrate-binding positions include 86–89 (DGSS), Tyr-189, and Lys-220. Glu-226 lines the Mg(2+) pocket.

The protein belongs to the FBPase class 1 family. As to quaternary structure, homotetramer. Mg(2+) serves as cofactor.

Its subcellular location is the cytoplasm. It catalyses the reaction beta-D-fructose 1,6-bisphosphate + H2O = beta-D-fructose 6-phosphate + phosphate. The protein operates within carbohydrate biosynthesis; gluconeogenesis. This is Fructose-1,6-bisphosphatase class 1 from Campylobacter jejuni subsp. jejuni serotype O:2 (strain ATCC 700819 / NCTC 11168).